The following is a 426-amino-acid chain: UDP-N-acetylglucosamine 1-carboxyvinyltransferase (426 aa).

22-23 (KN) contacts phosphoenolpyruvate. Residue arginine 99 participates in UDP-N-acetyl-alpha-D-glucosamine binding. Cysteine 123 (proton donor) is an active-site residue. Cysteine 123 carries the 2-(S-cysteinyl)pyruvic acid O-phosphothioketal modification. UDP-N-acetyl-alpha-D-glucosamine contacts are provided by residues 128–132 (RPIDL), aspartate 313, and isoleucine 335.

It belongs to the EPSP synthase family. MurA subfamily.

Its subcellular location is the cytoplasm. The catalysed reaction is phosphoenolpyruvate + UDP-N-acetyl-alpha-D-glucosamine = UDP-N-acetyl-3-O-(1-carboxyvinyl)-alpha-D-glucosamine + phosphate. It participates in cell wall biogenesis; peptidoglycan biosynthesis. Functionally, cell wall formation. Adds enolpyruvyl to UDP-N-acetylglucosamine. This chain is UDP-N-acetylglucosamine 1-carboxyvinyltransferase, found in Zymomonas mobilis subsp. mobilis (strain ATCC 31821 / ZM4 / CP4).